Consider the following 253-residue polypeptide: Triosephosphate isomerase (253 aa).

Residue 8–10 (NWK) coordinates substrate. Catalysis depends on H93, which acts as the Electrophile. The active-site Proton acceptor is E165. Substrate is bound by residues G171, S210, and 231-232 (GG).

It belongs to the triosephosphate isomerase family. Homodimer.

Its subcellular location is the cytoplasm. It carries out the reaction D-glyceraldehyde 3-phosphate = dihydroxyacetone phosphate. It functions in the pathway carbohydrate biosynthesis; gluconeogenesis. Its pathway is carbohydrate degradation; glycolysis; D-glyceraldehyde 3-phosphate from glycerone phosphate: step 1/1. Its function is as follows. Involved in the gluconeogenesis. Catalyzes stereospecifically the conversion of dihydroxyacetone phosphate (DHAP) to D-glyceraldehyde-3-phosphate (G3P). This Francisella tularensis subsp. tularensis (strain FSC 198) protein is Triosephosphate isomerase.